A 473-amino-acid chain; its full sequence is uncharacterized protein (473 aa).

The first 35 residues, 1–35 (MLWAHCGRFLRYHLLPLLLCRLPFLLFFQRPQWAH), serve as a signal peptide directing secretion. 3 disordered regions span residues 142-201 (QRRR…RRRH), 232-254 (RGRLRHPAGSGPNTGGPRPGGAG), and 331-437 (IIPP…MTTN). Pro residues predominate over residues 155–165 (PSFPPPDPPSQ). Residues 168–182 (EDARDADAERAESPH) show a composition bias toward basic and acidic residues. The segment covering 243–254 (PNTGGPRPGGAG) has biased composition (gly residues). Positions 341–397 (QNEEPRQQLTGEETRNSTHTQREEVEDVSREGAREGNDGSRASGNDERRNNAGRYDD) are enriched in basic and acidic residues.

It belongs to the HHV-5 UL13 protein family. As to quaternary structure, interacts with host MICOS complex subunits IMMT and CHCHD3.

It localises to the host mitochondrion. In terms of biological role, plays an essential role during infection by modulating mitochondrial ultrastructure and thereby increasing bioenergetic potential. Mechanistically, alters cristae architecture by interacting with components of the host mitochondrial contact site and cristae organizing system (MICOS) complex. This is an uncharacterized protein from Human cytomegalovirus (strain Merlin) (HHV-5).